Consider the following 212-residue polypeptide: Ribosomal RNA small subunit methyltransferase G (212 aa).

S-adenosyl-L-methionine contacts are provided by residues glycine 75, leucine 80, 126 to 127 (AQ), and arginine 141.

It belongs to the methyltransferase superfamily. RNA methyltransferase RsmG family.

The protein localises to the cytoplasm. Functionally, specifically methylates the N7 position of guanine in position 518 of 16S rRNA. This Beutenbergia cavernae (strain ATCC BAA-8 / DSM 12333 / CCUG 43141 / JCM 11478 / NBRC 16432 / NCIMB 13614 / HKI 0122) protein is Ribosomal RNA small subunit methyltransferase G.